The chain runs to 878 residues: Fanconi-associated nuclease 1 homolog (878 aa).

The UBZ4-type zinc finger occupies 32–59 (GKTCPLCNIKFSLASYRSHMNVCKVADD). Residues C35, C38, H50, and C54 each coordinate Zn(2+). A disordered region spans residues 88 to 180 (ENSGQEIPVN…QKSQSESQEA (93 aa)). The segment covering 142-161 (SEVRSVEKEIKKSPVWENRR) has biased composition (basic and acidic residues). Residues 168 to 179 (QNSQKSQSESQE) are compositionally biased toward low complexity. Positions 695, 823, 838, and 839 each coordinate Mn(2+). The 114-residue stretch at 757 to 870 (QETIEDNIRR…GIKAEVCHVE (114 aa)) folds into the VRR-NUC domain.

This sequence belongs to the FAN1 family. Mn(2+) serves as cofactor. Mg(2+) is required as a cofactor.

It is found in the nucleus. The enzyme catalyses Hydrolytically removes 5'-nucleotides successively from the 3'-hydroxy termini of 3'-hydroxy-terminated oligonucleotides.. In terms of biological role, nuclease required for the repair of DNA interstrand cross-links (ICL). Acts as a 5'-3' exonuclease that anchors at a cut end of DNA and cleaves DNA successively at every third nucleotide, allowing to excise an ICL from one strand through flanking incisions. The sequence is that of Fanconi-associated nuclease 1 homolog (fan-1) from Caenorhabditis briggsae.